The following is a 601-amino-acid chain: RNA-binding protein MEX3B (601 aa).

Disordered stretches follow at residues 1-39 and 90-109; these read MPSSLFADLERNGSGGGGGGGGGGGGGGSGGGETLDDQR and GRQGGSGRDGDRRGFSISPT. Ser-4 is subject to Phosphoserine. Over residues 13–33 the composition is skewed to gly residues; sequence GSGGGGGGGGGGGGGGSGGGE. KH domains are found at residues 98–159 and 192–253; these read DGDR…RREI and QTTI…REEI. Disordered regions lie at residues 284-332 and 344-448; these read LHHG…TDSY and TSRL…GGAS. Ser-320 is subject to Phosphoserine. Composition is skewed to low complexity over residues 320-331 and 362-371; these read SSSSLGSASTDS and NGNNNNNGNG. The segment covering 395-404 has biased composition (pro residues); that stretch reads DPAPAPPPGT. Residues 420-442 are compositionally biased toward low complexity; sequence AAPVSSSCSSSASSSASSSSVVF. The residue at position 494 (Ser-494) is a Phosphoserine. The segment at 514–546 is disordered; it reads LPGLPSSDTSGSSSSSSSSSSSSSSSSGLRRKG. The segment covering 519-540 has biased composition (low complexity); the sequence is SSDTSGSSSSSSSSSSSSSSSS. An RING-type zinc finger spans residues 550 to 590; that stretch reads CSVCFESEVIAALVPCGHNLFCMECANRICEKSEPECPVCH.

Phosphorylation at Ser-494 creates a docking site for 14-3-3, which stabilizes the protein and modulates its ability to bind RNA.

It is found in the cytoplasm. It localises to the nucleus. The protein localises to the P-body. The protein resides in the cytoplasmic granule. Its function is as follows. RNA-binding protein. May be involved in post-transcriptional regulatory mechanisms. The protein is RNA-binding protein MEX3B (Mex3b) of Mus musculus (Mouse).